The following is a 156-amino-acid chain: ATP synthase subunit b (156 aa).

The helical transmembrane segment at Ile3–Thr23 threads the bilayer.

Belongs to the ATPase B chain family. In terms of assembly, F-type ATPases have 2 components, F(1) - the catalytic core - and F(0) - the membrane proton channel. F(1) has five subunits: alpha(3), beta(3), gamma(1), delta(1), epsilon(1). F(0) has three main subunits: a(1), b(2) and c(10-14). The alpha and beta chains form an alternating ring which encloses part of the gamma chain. F(1) is attached to F(0) by a central stalk formed by the gamma and epsilon chains, while a peripheral stalk is formed by the delta and b chains.

It is found in the cell inner membrane. Its function is as follows. F(1)F(0) ATP synthase produces ATP from ADP in the presence of a proton or sodium gradient. F-type ATPases consist of two structural domains, F(1) containing the extramembraneous catalytic core and F(0) containing the membrane proton channel, linked together by a central stalk and a peripheral stalk. During catalysis, ATP synthesis in the catalytic domain of F(1) is coupled via a rotary mechanism of the central stalk subunits to proton translocation. Functionally, component of the F(0) channel, it forms part of the peripheral stalk, linking F(1) to F(0). The protein is ATP synthase subunit b of Xylella fastidiosa (strain M23).